A 1400-amino-acid polypeptide reads, in one-letter code: Clustered mitochondria protein homolog (1400 aa).

Disordered regions lie at residues 1-39 (MVSK…KEAS), 56-78 (GHDQ…QAED), and 212-243 (GDTG…KERP). A compositionally biased stretch (basic and acidic residues) spans 56–69 (GHDQAEEADSKQDG). The 243-residue stretch at 380-622 (RAEDAYTSRL…RTFPPDLNFL (243 aa)) folds into the Clu domain. Residues 684–741 (AALQDSNAAGAGSENKPLALESCDGTPDSPTSSESTLTPEDSEATTVSENSSAENQEA) are disordered. Over residues 707–722 (DGTPDSPTSSESTLTP) the composition is skewed to low complexity. Over residues 727 to 741 (ATTVSENSSAENQEA) the composition is skewed to polar residues. TPR repeat units follow at residues 1088-1121 (AFHF…FNNV), 1130-1163 (CACL…SERV), 1172-1205 (IQEY…MLVV), and 1214-1247 (ALLD…NTKY). Polar residues predominate over residues 1377–1388 (QDSGKIQEQQGS). The disordered stretch occupies residues 1377–1400 (QDSGKIQEQQGSHLELDDKLPVDD). Residues 1390 to 1400 (LELDDKLPVDD) show a composition bias toward basic and acidic residues.

This sequence belongs to the CLU family.

It localises to the cytoplasm. In terms of biological role, mRNA-binding protein involved in proper cytoplasmic distribution of mitochondria. This Danio rerio (Zebrafish) protein is Clustered mitochondria protein homolog.